Reading from the N-terminus, the 160-residue chain is Lipoprotein signal peptidase (160 aa).

The next 2 helical transmembrane spans lie at Thr-60–Leu-80 and Leu-84–Ile-104. Catalysis depends on residues Asp-118 and Asp-132. The chain crosses the membrane as a helical span at residues Thr-127 to Leu-147.

Belongs to the peptidase A8 family.

It localises to the cell membrane. The catalysed reaction is Release of signal peptides from bacterial membrane prolipoproteins. Hydrolyzes -Xaa-Yaa-Zaa-|-(S,diacylglyceryl)Cys-, in which Xaa is hydrophobic (preferably Leu), and Yaa (Ala or Ser) and Zaa (Gly or Ala) have small, neutral side chains.. It functions in the pathway protein modification; lipoprotein biosynthesis (signal peptide cleavage). Functionally, this protein specifically catalyzes the removal of signal peptides from prolipoproteins. The protein is Lipoprotein signal peptidase of Dehalococcoides mccartyi (strain ATCC BAA-2266 / KCTC 15142 / 195) (Dehalococcoides ethenogenes (strain 195)).